The chain runs to 144 residues: Interferon-induced transmembrane protein 2 (144 aa).

Position 1 is an N-acetylmethionine (M1). The Cytoplasmic portion of the chain corresponds to 1-56 (MSHNSQAFLSTNAGLPPSYETIKEEYGVTELGEPSNSAVVRTTVINMPREVSVPDH). Y19 bears the Phosphotyrosine mark. An intramembrane region (helical) is located at residues 57-77 (VVWSLFNTLFFNACCLGFVAY). S-palmitoyl cysteine attachment occurs at residues C70, C71, and C104. The Cytoplasmic segment spans residues 78–110 (AYSVKSRDRKMVGDVVGAQAYASTAKCLNISSL). A helical transmembrane segment spans residues 111 to 131 (IFSILMVIICIIIFSTTSVVV). Topologically, residues 132 to 144 (FQSFAQRTPHSGF) are extracellular.

Belongs to the CD225/Dispanin family. In terms of assembly, interacts with CD81. In terms of processing, palmitoylation on membrane-proximal cysteines controls clustering in membrane compartments and antiviral activity. Phosphorylation at Tyr-19 is required for endosomal and lysosomal location. As to expression, predominantly expressed in nascent primordial germ cells, as well as in gonadal germ cells.

Its subcellular location is the cell membrane. The protein resides in the lysosome membrane. The protein localises to the late endosome membrane. In terms of biological role, IFN-induced antiviral protein which inhibits the entry of viruses to the host cell cytoplasm, permitting endocytosis, but preventing subsequent viral fusion and release of viral contents into the cytosol. Active against multiple viruses, including influenza A virus, SARS coronavirus (SARS-CoV), Marburg virus (MARV) and Ebola virus (EBOV), Dengue virus (DNV) and West Nile virus (WNV). Can inhibit: influenza virus hemagglutinin protein-mediated viral entry, MARV and EBOV GP1,2-mediated viral entry and SARS-CoV S protein-mediated viral entry. Induces cell cycle arrest and mediates apoptosis by caspase activation and in p53-independent manner. The polypeptide is Interferon-induced transmembrane protein 2 (Ifitm2) (Mus musculus (Mouse)).